Consider the following 960-residue polypeptide: Serine/threonine-protein kinase atg1 (960 aa).

The region spanning 22-327 (YTRLDEIGRG…FPEFFSNNVI (306 aa)) is the Protein kinase domain. ATP is bound by residues 28–36 (IGRGSFATV) and Lys-51. Asp-165 functions as the Proton acceptor in the catalytic mechanism. 6 disordered regions span residues 333–467 (GLLA…RAQE), 503–538 (PRLQ…PHAN), 550–571 (ARAD…QSPT), 673–694 (SAST…SADS), 789–815 (RLPP…TADV), and 926–960 (AKRS…TPPR). Composition is skewed to polar residues over residues 376-388 (PVTT…TPPT) and 520-536 (RRTT…SSPH). Residues 550–566 (ARADSTHQRQHSYERRY) are compositionally biased toward basic and acidic residues. Basic and acidic residues predominate over residues 789-800 (RLPPDHPSHPDN). Over residues 801 to 815 (HSISSTAGSSSTADV) the composition is skewed to low complexity. A compositionally biased stretch (polar residues) spans 930-951 (SAPTPTAGSAGKTPTSNISPVT).

This sequence belongs to the protein kinase superfamily. Ser/Thr protein kinase family. APG1/unc-51/ULK1 subfamily. In terms of assembly, homodimer. Forms a ternary complex with ATG13 and ATG17.

The protein localises to the cytoplasm. It is found in the preautophagosomal structure membrane. It carries out the reaction L-seryl-[protein] + ATP = O-phospho-L-seryl-[protein] + ADP + H(+). The catalysed reaction is L-threonyl-[protein] + ATP = O-phospho-L-threonyl-[protein] + ADP + H(+). Serine/threonine protein kinase involved in the cytoplasm to vacuole transport (Cvt) and found to be essential in autophagy, where it is required for the formation of autophagosomes. Involved in the clearance of protein aggregates which cannot be efficiently cleared by the proteasome. Required for selective autophagic degradation of the nucleus (nucleophagy) as well as for mitophagy which contributes to regulate mitochondrial quantity and quality by eliminating the mitochondria to a basal level to fulfill cellular energy requirements and preventing excess ROS production. Also involved in endoplasmic reticulum-specific autophagic process, in selective removal of ER-associated degradation (ERAD) substrates. Plays a key role in ATG9 and ATG23 cycling through the pre-autophagosomal structure and is necessary to promote ATG18 binding to ATG9 through phosphorylation of ATG9. Catalyzes phosphorylation of ATG4, decreasing the interaction between ATG4 and ATG8 and impairing deconjugation of PE-conjugated forms of ATG8. This chain is Serine/threonine-protein kinase atg1, found in Penicillium rubens (strain ATCC 28089 / DSM 1075 / NRRL 1951 / Wisconsin 54-1255) (Penicillium chrysogenum).